Reading from the N-terminus, the 906-residue chain is Cadherin-2 (906 aa).

The N-terminal stretch at 1–25 (MCRIAGAPRTLLPLLAALLQASVEA) is a signal peptide. A propeptide spanning residues 26–159 (SGEIALCKTG…HSGALQRQKR (134 aa)) is cleaved from the precursor. Cadherin domains are found at residues 160–267 (DWVI…RPEF), 268–382 (LHQV…PPEF), 383–497 (TAMT…NPYF), 498–603 (APNP…DNAP), and 604–717 (QVLP…RIVG). Residues 160–724 (DWVIPPINLP…IVGAGLGTGA (565 aa)) are Extracellular-facing. Ca(2+) is bound at residue E170. N190 carries an N-linked (GlcNAc...) asparagine glycan. 7 residues coordinate Ca(2+): D226, E228, D259, M260, N261, D262, and N263. N-linked (GlcNAc...) asparagine glycosylation occurs at N273. Residues D293, D295, and N301 each coordinate Ca(2+). N-linked (GlcNAc...) asparagine glycosylation is present at N325. D353 contributes to the Ca(2+) binding site. Residues N402, N572, N651, and N692 are each glycosylated (N-linked (GlcNAc...) asparagine). A helical transmembrane segment spans residues 725-745 (IIAILLCIIILLILVLMFVVW). At 746-906 (MKRRDKERQA…LADMYGGGDD (161 aa)) the chain is on the cytoplasmic side. Residues 863 to 880 (SGSTAGSLSSLNSSSSGG) show a composition bias toward low complexity. The tract at residues 863–883 (SGSTAGSLSSLNSSSSGGDQD) is disordered.

As to quaternary structure, homodimer (via extracellular region). Can also form heterodimers with other cadherins (via extracellular region). Dimerization occurs in trans, i.e. with a cadherin chain from another cell. Interacts with CDCP1. Interacts with PCDH8; this complex may also include TAOK2. The interaction with PCDH8 may lead to internalization through TAOK2/p38 MAPK pathway. Identified in a complex containing FGFR4, NCAM1, CDH2, PLCG1, FRS2, SRC, SHC1, GAP43 and CTTN. May interact with OBSCN (via protein kinase domain 2). Interacts with FBXO45. In terms of processing, cleaved by MMP24. Ectodomain cleavage leads to the generation of a soluble 90 kDa N-terminal soluble fragment and a 45 kDa membrane-bound C-terminal fragment 1 (CTF1), which is further cleaved by gamma-secretase into a 35 kDa. Cleavage in neural stem cells by MMP24 affects CDH2-mediated anchorage of neural stem cells to ependymocytes in the adult subependymal zone, leading to modulate neural stem cell quiescence. May be phosphorylated by OBSCN. Post-translationally, O-glycosylated on Ser and Thr residues. As to expression, expressed in cardiac muscle (at protein level).

The protein resides in the cell membrane. Its subcellular location is the sarcolemma. The protein localises to the cell junction. It localises to the adherens junction. It is found in the desmosome. The protein resides in the cell surface. Calcium-dependent cell adhesion protein; preferentially mediates homotypic cell-cell adhesion by dimerization with a CDH2 chain from another cell. Cadherins may thus contribute to the sorting of heterogeneous cell types. Acts as a regulator of neural stem cells quiescence by mediating anchorage of neural stem cells to ependymocytes in the adult subependymal zone: upon cleavage by MMP24, CDH2-mediated anchorage is affected, leading to modulate neural stem cell quiescence. Plays a role in cell-to-cell junction formation between pancreatic beta cells and neural crest stem (NCS) cells, promoting the formation of processes by NCS cells. Required for proper neurite branching. Required for pre- and postsynaptic organization. CDH2 may be involved in neuronal recognition mechanism. In hippocampal neurons, may regulate dendritic spine density. The sequence is that of Cadherin-2 (Cdh2) from Mus musculus (Mouse).